The sequence spans 386 residues: Cystathionine gamma-synthase (386 aa).

Position 198 is an N6-(pyridoxal phosphate)lysine (Lys198).

This sequence belongs to the trans-sulfuration enzymes family. In terms of assembly, homotetramer. Pyridoxal 5'-phosphate is required as a cofactor.

The protein resides in the cytoplasm. It carries out the reaction O-succinyl-L-homoserine + L-cysteine = L,L-cystathionine + succinate + H(+). It functions in the pathway amino-acid biosynthesis; L-methionine biosynthesis via de novo pathway; L-cystathionine from O-succinyl-L-homoserine: step 1/1. Functionally, catalyzes the formation of L-cystathionine from O-succinyl-L-homoserine (OSHS) and L-cysteine, via a gamma-replacement reaction. In the absence of thiol, catalyzes gamma-elimination to form 2-oxobutanoate, succinate and ammonia. This chain is Cystathionine gamma-synthase (metB), found in Escherichia coli (strain K12).